Consider the following 367-residue polypeptide: MISSLHRPTLAKVDLSAISENIEQVVSHIPKQVQTFAVVKANAYGHGAVEVAKHVSKQVDGFCVSNLDEALELRQAGIEQPILILGVVLPDGVPLAIQENISLTVASLEWLTLAQKQGLDLTGLTCHIKVDSGMGRIGVRNLKDADNLIAGLKALGADVEGIFTHFATADEADDSKFKRQLSFFTDLVDNLTDRPRLVHASNSATSIWHAATVFNTVRLGVVIYGLNPSGSVLELPYNIQPALSLETALIHVKTLPAGQDVGYGATYTTTDEEVIGTLPIGYADGWTRDLQGFHVIVDGQLCPIVGRVSMDQITVRLPKVYPLGTPVTLMGENGGVSITATEVAEKRGTINYEVLCLLSDRVPRSYD.

Lys-40 serves as the catalytic Proton acceptor; specific for D-alanine. Lys-40 carries the post-translational modification N6-(pyridoxal phosphate)lysine. Arg-136 contacts substrate. The Proton acceptor; specific for L-alanine role is filled by Tyr-263. Met-310 is a substrate binding site.

The protein belongs to the alanine racemase family. Requires pyridoxal 5'-phosphate as cofactor.

The enzyme catalyses L-alanine = D-alanine. Its pathway is amino-acid biosynthesis; D-alanine biosynthesis; D-alanine from L-alanine: step 1/1. Catalyzes the interconversion of L-alanine and D-alanine. May also act on other amino acids. This chain is Alanine racemase (alr), found in Streptococcus thermophilus (strain ATCC BAA-250 / LMG 18311).